Here is a 301-residue protein sequence, read N- to C-terminus: Sulfate adenylyltransferase subunit 2 (301 aa).

The interval 278 to 301 (ERQGRLIDGDEPASMERKKREGYF) is disordered.

It belongs to the PAPS reductase family. CysD subfamily. As to quaternary structure, sulfate-activating enzymes, NodP and NodQ, may be physically associated.

The catalysed reaction is sulfate + ATP + H(+) = adenosine 5'-phosphosulfate + diphosphate. Its function is as follows. Proposed to provide activated sulfate for transfer to nod factor. This Azospirillum brasilense protein is Sulfate adenylyltransferase subunit 2 (nodP).